A 309-amino-acid chain; its full sequence is Small ribosomal subunit protein mS23 (309 aa).

It belongs to the mitochondrion-specific ribosomal protein mS23 family. In terms of assembly, component of the mitochondrial small ribosomal subunit.

The protein resides in the mitochondrion. The sequence is that of Small ribosomal subunit protein mS23 (RSM25) from Lodderomyces elongisporus (strain ATCC 11503 / CBS 2605 / JCM 1781 / NBRC 1676 / NRRL YB-4239) (Yeast).